The chain runs to 452 residues: uncharacterized protein (452 aa).

The next 7 membrane-spanning stretches (helical) occupy residues 18 to 38, 81 to 101, 269 to 289, 317 to 337, 354 to 374, 390 to 410, and 428 to 448; these read PIIESDLEVIVIALGGYVLAK, LLPVFYVIISAASILISFLLA, IVLLLDFFSPPLYSLFIALFI, AGQVAVPMILVVLGASLATDI, VIIVCLLGRMVVVPLALLPAF, VFVVVIFLLVGSPTAIQLTQI, and SYAVFTPPNSLLLAFASLLVV.

It belongs to the auxin efflux carrier (TC 2.A.69) family.

Its subcellular location is the membrane. This is an uncharacterized protein from Schizosaccharomyces pombe (strain 972 / ATCC 24843) (Fission yeast).